A 342-amino-acid chain; its full sequence is Lipase B (342 aa).

A signal peptide spans 1-18 (MKLLSLTGVAGVLATCVA). A propeptide spanning residues 19 to 25 (ATPLVKR) is cleaved from the precursor. Residues cysteine 47 and cysteine 89 are joined by a disulfide bond. A glycan (N-linked (GlcNAc...) asparagine) is linked at asparagine 99. Active-site residues include serine 130, aspartate 212, and histidine 249. Intrachain disulfides connect cysteine 241/cysteine 283 and cysteine 318/cysteine 336.

It carries out the reaction a triacylglycerol + H2O = a diacylglycerol + a fatty acid + H(+). Functionally, hydrolysis of triglycerides. Is very stereospecific both in hydrolysis and in organic synthesis and has a potentially important application in glucolipid synthesis. In Pseudozyma antarctica (Yeast), this protein is Lipase B.